Reading from the N-terminus, the 509-residue chain is H/ACA ribonucleoprotein complex subunit DKC1 (509 aa).

The segment at 1-24 (MADAEVITFPKKHKKKKDRKPLQE) is disordered. At alanine 2 the chain carries N-acetylalanine. Positions 2 to 21 (ADAEVITFPKKHKKKKDRKP) are nucleolar localization. Positions 10–19 (PKKHKKKKDR) are enriched in basic residues. Glycyl lysine isopeptide (Lys-Gly) (interchain with G-Cter in SUMO2) cross-links involve residues lysine 20, lysine 39, and lysine 43. Aspartate 125 (nucleophile) is an active-site residue. Residue lysine 191 forms a Glycyl lysine isopeptide (Lys-Gly) (interchain with G-Cter in SUMO2) linkage. Residues 297 to 372 (KRLVMKDSAV…VAKIKRVIME (76 aa)) enclose the PUA domain. At serine 387 the chain carries Phosphoserine. Lysine 394 participates in a covalent cross-link: Glycyl lysine isopeptide (Lys-Gly) (interchain with G-Cter in SUMO2). Lysine 413 is covalently cross-linked (Glycyl lysine isopeptide (Lys-Gly) (interchain with G-Cter in SUMO1); alternate). Residue lysine 413 forms a Glycyl lysine isopeptide (Lys-Gly) (interchain with G-Cter in SUMO2); alternate linkage. Residue lysine 424 forms a Glycyl lysine isopeptide (Lys-Gly) (interchain with G-Cter in SUMO2) linkage. The interval 446-509 (KRKRDSESES…KVKVVEEMSE (64 aa)) is nuclear and nucleolar localization. The disordered stretch occupies residues 447–509 (RKRDSESESD…KVKVVEEMSE (63 aa)). Phosphoserine is present on residues serine 451, serine 453, and serine 455. At threonine 458 the chain carries Phosphothreonine. Over residues 466 to 476 (EKKKKKDKKPK) the composition is skewed to basic residues. Serine 481 bears the Phosphoserine mark. A Phosphothreonine modification is found at threonine 485. Position 508 is a phosphoserine (serine 508).

It belongs to the pseudouridine synthase TruB family. Part of the H/ACA small nucleolar ribonucleoprotein (H/ACA snoRNP) complex, which contains NHP2/NOLA2, GAR1/NOLA1, NOP10/NOLA3, and DKC1/NOLA4, which is presumed to be the catalytic subunit. The complex contains a stable core formed by binding of one or two NOP10-DKC1 heterodimers to NHP2; GAR1 subsequently binds to this core via DKC1. The complex binds a box H/ACA small nucleolar RNA (snoRNA), which may target the specific site of modification within the RNA substrate. During assembly, the complex contains NAF1 instead of GAR1/NOLA1. The complex also interacts with TERC, which contains a 3'-terminal domain related to the box H/ACA snoRNAs. Specific interactions with snoRNAs or TERC are mediated by GAR1 and NHP2. Associates with NOLC1/NOPP140. H/ACA snoRNPs interact with the SMN complex, consisting of SMN1 or SMN2, GEMIN2/SIP1, DDX20/GEMIN3, and GEMIN4. This is mediated by interaction between GAR1 and SMN1 or SMN2. The SMN complex may be required for correct assembly of the H/ACA snoRNP complex. Component of the telomerase holoenzyme complex composed of one molecule of TERT, one molecule of WRAP53/TCAB1, two molecules of H/ACA ribonucleoprotein complex subunits DKC1, NOP10, NHP2 and GAR1, and a telomerase RNA template component (TERC). The telomerase holoenzyme complex is associated with TEP1, SMG6/EST1A and POT1. Interacts with SHQ1; this interaction may lead to the stabilization of DKC1, from the time of its synthesis until its association with NOP10, NHP2, and NAF1 at the nascent H/ACA RNA. Interacts with HMBOX1. Interacts with DHX36. As to expression, ubiquitously expressed, with elevated levels in Purkinje cells, the olfactory bulb, and Leydig cells of the testis.

It localises to the nucleus. It is found in the nucleolus. The protein resides in the cajal body. The enzyme catalyses uridine in 5S rRNA = pseudouridine in 5S rRNA. Catalytic subunit of H/ACA small nucleolar ribonucleoprotein (H/ACA snoRNP) complex, which catalyzes pseudouridylation of rRNA. This involves the isomerization of uridine such that the ribose is subsequently attached to C5, instead of the normal N1. Each rRNA can contain up to 100 pseudouridine ('psi') residues, which may serve to stabilize the conformation of rRNAs. Required for ribosome biogenesis and telomere maintenance. Also required for correct processing or intranuclear trafficking of TERC, the RNA component of the telomerase reverse transcriptase (TERT) holoenzyme. The protein is H/ACA ribonucleoprotein complex subunit DKC1 (Dkc1) of Mus musculus (Mouse).